The chain runs to 204 residues: Tumor necrosis factor receptor superfamily member 26 (204 aa).

The first 19 residues, 1-19, serve as a signal peptide directing secretion; the sequence is MTRLRLLLLLGLLLRVAVC. At 20-164 the chain is on the extracellular side; sequence SVNTITLCKI…SQCFCFSKPL (145 aa). Intrachain disulfides connect Cys-27–Cys-38, Cys-39–Cys-52, Cys-42–Cys-61, Cys-64–Cys-79, Cys-82–Cys-95, Cys-85–Cys-103, Cys-105–Cys-120, Cys-123–Cys-135, and Cys-126–Cys-143. 3 TNFR-Cys repeats span residues 27–61, 63–103, and 104–143; these read CKIG…KSEC, PCDS…DRVC, and QCKQ…DTVC. Asn-57 is a glycosylation site (N-linked (GlcNAc...) asparagine). Asn-136 carries N-linked (GlcNAc...) asparagine glycosylation. The chain crosses the membrane as a helical span at residues 165 to 185; it reads GIVVIIAAFIIIIGAVIILIL. Over 186 to 204 the chain is Cytoplasmic; sequence KIICYCKRGENIQLSSTML.

As to expression, expressed in thymus and spleen. Detectable levels in lung.

It is found in the membrane. The chain is Tumor necrosis factor receptor superfamily member 26 (Tnfrsf26) from Mus musculus (Mouse).